The following is a 337-amino-acid chain: Glyceraldehyde-3-phosphate dehydrogenase (337 aa).

NAD(+)-binding positions include Arg12–Ile13, Asp34, and Arg79. Residues Ser150–Thr152, Thr181, Thr210–Gly211, and Arg233 contribute to the D-glyceraldehyde 3-phosphate site. Cys151 acts as the Nucleophile in catalysis. Asn315 serves as a coordination point for NAD(+).

The protein belongs to the glyceraldehyde-3-phosphate dehydrogenase family. In terms of assembly, homotetramer.

Its subcellular location is the cytoplasm. It carries out the reaction D-glyceraldehyde 3-phosphate + phosphate + NAD(+) = (2R)-3-phospho-glyceroyl phosphate + NADH + H(+). It participates in carbohydrate degradation; glycolysis; pyruvate from D-glyceraldehyde 3-phosphate: step 1/5. The protein is Glyceraldehyde-3-phosphate dehydrogenase (GPD) of Coccidioides posadasii (strain C735) (Valley fever fungus).